Here is a 265-residue protein sequence, read N- to C-terminus: 5'-nucleotidase SurE (265 aa).

A divalent metal cation contacts are provided by D8, D9, S39, and N96.

Belongs to the SurE nucleotidase family. The cofactor is a divalent metal cation.

The protein localises to the cytoplasm. It catalyses the reaction a ribonucleoside 5'-phosphate + H2O = a ribonucleoside + phosphate. Its function is as follows. Nucleotidase that shows phosphatase activity on nucleoside 5'-monophosphates. The polypeptide is 5'-nucleotidase SurE (Dehalococcoides mccartyi (strain ATCC BAA-2100 / JCM 16839 / KCTC 5957 / BAV1)).